We begin with the raw amino-acid sequence, 375 residues long: Cobalt-precorrin-5B C(1)-methyltransferase (375 aa).

This sequence belongs to the CbiD family.

The enzyme catalyses Co-precorrin-5B + S-adenosyl-L-methionine = Co-precorrin-6A + S-adenosyl-L-homocysteine. It participates in cofactor biosynthesis; adenosylcobalamin biosynthesis; cob(II)yrinate a,c-diamide from sirohydrochlorin (anaerobic route): step 6/10. Its function is as follows. Catalyzes the methylation of C-1 in cobalt-precorrin-5B to form cobalt-precorrin-6A. This is Cobalt-precorrin-5B C(1)-methyltransferase from Fusobacterium nucleatum subsp. nucleatum (strain ATCC 25586 / DSM 15643 / BCRC 10681 / CIP 101130 / JCM 8532 / KCTC 2640 / LMG 13131 / VPI 4355).